Consider the following 242-residue polypeptide: tRNA pseudouridine synthase A (242 aa).

D51 serves as the catalytic Nucleophile. Substrate is bound at residue Y107.

This sequence belongs to the tRNA pseudouridine synthase TruA family. As to quaternary structure, homodimer.

It catalyses the reaction uridine(38/39/40) in tRNA = pseudouridine(38/39/40) in tRNA. Formation of pseudouridine at positions 38, 39 and 40 in the anticodon stem and loop of transfer RNAs. The protein is tRNA pseudouridine synthase A of Helicobacter pylori (strain G27).